Here is a 189-residue protein sequence, read N- to C-terminus: MKTGKELKPGTVLRIDNDPWLVQKAEFTKSGRNSAIMKTKLKNLLTGYKTETVYGADDKLDDVILDRKEATLSFISGDSYTFMDTTDYTMYELNAEDIDAVLPYIEEGMEDICEAVFFEGRLVSVELPTTISRQVTYTENAARGDTSGKVMKPAKLKNGTEIQVADFIQIDEWIDIDTRDNSFKGRSKK.

It belongs to the elongation factor P family.

The protein resides in the cytoplasm. It participates in protein biosynthesis; polypeptide chain elongation. Involved in peptide bond synthesis. Stimulates efficient translation and peptide-bond synthesis on native or reconstituted 70S ribosomes in vitro. Probably functions indirectly by altering the affinity of the ribosome for aminoacyl-tRNA, thus increasing their reactivity as acceptors for peptidyl transferase. This chain is Elongation factor P, found in Pseudomonas entomophila (strain L48).